A 1026-amino-acid chain; its full sequence is Vacuolar protein sorting-associated protein 18 homolog (1026 aa).

Residues 858 to 896 are a coiled coil; sequence IVDFLKRNKQRLEKLERSMKEATEIASEIRDKQEKLKNR. The segment at 906 to 932 adopts an RING-type; degenerate zinc-finger fold; sequence CSHCARPISGRAFNVHSCRHFFHRECL.

In terms of assembly, probable core component of at least two putative endosomal tethering complexes, the homotypic fusion and vacuole protein sorting (HOPS) complex and the class C core vacuole/endosome tethering (CORVET) complex. Their common core is composed of the class C Vps proteins vps-11, vps-16 and vps-18, which in HOPS further associates with vps-33.1, vps-39 and vps-41 and in CORVET with vps-8 and vps-33.2. As to expression, in hermaphrodites, expressed in coelomocytes and gonadal sheath cells.

Its subcellular location is the cytoplasm. It localises to the late endosome membrane. The protein localises to the lysosome membrane. It is found in the early endosome. The protein resides in the cytoplasmic vesicle. Its subcellular location is the autophagosome. It localises to the clathrin-coated vesicle. In terms of biological role, plays a role in vesicle-mediated protein trafficking to lysosomal compartments including the endocytic membrane transport and autophagic pathways. Believed to act as a core component of the putative HOPS and CORVET endosomal tethering complexes which are proposed to be involved in the rab-5-to-rab-7 endosome conversion probably implicating sand-1, and via binding SNAREs and SNARE complexes to mediate tethering and docking events during SNARE-mediated membrane fusion. The HOPS complex is proposed to be recruited to rab-7 on the late endosomal membrane and to regulate late endocytic, phagocytic and autophagic traffic towards lysosomes. Within the HOPS complex, contributes to the normal development of gut granules in intestinal cells of the embryo, and also promotes the trafficking of embryonic intestinal gut granules away from lysosomes. The CORVET complex is proposed to function as a rab-5 effector to mediate early endosome fusion probably in specific endosome subpopulations. Required for fusion of endosomes and autophagosomes with lysosomes. Plays a role in the degradation of apoptotic cells during programmed cell death. This chain is Vacuolar protein sorting-associated protein 18 homolog, found in Caenorhabditis elegans.